We begin with the raw amino-acid sequence, 70 residues long: Large ribosomal subunit protein uL29 (70 aa).

Belongs to the universal ribosomal protein uL29 family.

The polypeptide is Large ribosomal subunit protein uL29 (Prochlorococcus marinus (strain MIT 9303)).